Here is a 56-residue protein sequence, read N- to C-terminus: Large ribosomal subunit protein bL32 (56 aa).

It belongs to the bacterial ribosomal protein bL32 family.

This Prochlorococcus marinus (strain MIT 9215) protein is Large ribosomal subunit protein bL32.